A 319-amino-acid polypeptide reads, in one-letter code: Bidirectional sugar transporter SWEET15 (319 aa).

The Extracellular segment spans residues 1–10; the sequence is MAFMSMERST. Residues 11 to 31 form a helical membrane-spanning segment; sequence WAFTFGILGNLISLMVFLSPL. One can recognise a MtN3/slv 1 domain in the interval 13 to 99; that stretch reads FTFGILGNLI…AMYLAYAPKS (87 aa). Over 32 to 50 the chain is Cytoplasmic; the sequence is PTFYRVYRKKSTEGFQSTP. A helical membrane pass occupies residues 51–71; the sequence is YVVTLFSCMLWMYYAFVKSGA. Glutamate 72 is a topological domain (extracellular). Residues 73-93 traverse the membrane as a helical segment; it reads LLVTINGVGCVIETVYLAMYL. At 94-106 the chain is on the cytoplasmic side; it reads AYAPKSARMLTAK. A helical membrane pass occupies residues 107–127; sequence MLLGLNIGLFGVIALVTLLLS. At 128-134 the chain is on the extracellular side; that stretch reads RGELRVH. Residues 135–155 form a helical membrane-spanning segment; it reads VLGWICVAVSLSVFAAPLSII. One can recognise a MtN3/slv 2 domain in the interval 135 to 219; sequence VLGWICVAVS…ALYMAYRSKK (85 aa). Residues 156-167 lie on the Cytoplasmic side of the membrane; that stretch reads RLVIRTKSVEFM. The helical transmembrane segment at 168–188 threads the bilayer; sequence PFSLSFFLVLSAVIWFLYGLL. Residues 189–191 lie on the Extracellular side of the membrane; sequence KKD. The chain crosses the membrane as a helical span at residues 192–212; it reads VFVALPNVLGFVFGVAQMALY. Residues 213–319 are Cytoplasmic-facing; it reads MAYRSKKPLV…KPDMAIVVEV (107 aa).

This sequence belongs to the SWEET sugar transporter family. As to quaternary structure, forms homooligomers and/or heterooligomers.

It is found in the cell membrane. Functionally, mediates both low-affinity uptake and efflux of sugar across the plasma membrane. Confers blight susceptibility. Confers TAL effector-mediated susceptibility to Xanthomonas oryzae pv. oryzae. The polypeptide is Bidirectional sugar transporter SWEET15 (SWEET15) (Oryza sativa subsp. japonica (Rice)).